The primary structure comprises 293 residues: Protease HtpX (293 aa).

2 helical membrane-spanning segments follow: residues 4-24 (IALF…VLSL) and 32-52 (VTGL…VSLL). Histidine 139 provides a ligand contact to Zn(2+). Residue glutamate 140 is part of the active site. Histidine 143 is a Zn(2+) binding site. 2 helical membrane-spanning segments follow: residues 158 to 178 (VVNT…AGFL) and 193 to 213 (LIYF…ASII). Glutamate 222 serves as a coordination point for Zn(2+).

This sequence belongs to the peptidase M48B family. It depends on Zn(2+) as a cofactor.

Its subcellular location is the cell inner membrane. In Cronobacter sakazakii (strain ATCC BAA-894) (Enterobacter sakazakii), this protein is Protease HtpX.